A 117-amino-acid chain; its full sequence is Large ribosomal subunit protein bL20c (117 aa).

The protein belongs to the bacterial ribosomal protein bL20 family.

The protein resides in the plastid. The protein localises to the chloroplast. Functionally, binds directly to 23S ribosomal RNA and is necessary for the in vitro assembly process of the 50S ribosomal subunit. It is not involved in the protein synthesizing functions of that subunit. In Phalaenopsis aphrodite subsp. formosana (Moth orchid), this protein is Large ribosomal subunit protein bL20c.